Here is a 216-residue protein sequence, read N- to C-terminus: ATP-dependent Clp protease proteolytic subunit (216 aa).

The active-site Nucleophile is serine 120. Histidine 145 is a catalytic residue.

The protein belongs to the peptidase S14 family. As to quaternary structure, fourteen ClpP subunits assemble into 2 heptameric rings which stack back to back to give a disk-like structure with a central cavity, resembling the structure of eukaryotic proteasomes.

Its subcellular location is the cytoplasm. It carries out the reaction Hydrolysis of proteins to small peptides in the presence of ATP and magnesium. alpha-casein is the usual test substrate. In the absence of ATP, only oligopeptides shorter than five residues are hydrolyzed (such as succinyl-Leu-Tyr-|-NHMec, and Leu-Tyr-Leu-|-Tyr-Trp, in which cleavage of the -Tyr-|-Leu- and -Tyr-|-Trp bonds also occurs).. Cleaves peptides in various proteins in a process that requires ATP hydrolysis. Has a chymotrypsin-like activity. Plays a major role in the degradation of misfolded proteins. The chain is ATP-dependent Clp protease proteolytic subunit from Cupriavidus pinatubonensis (strain JMP 134 / LMG 1197) (Cupriavidus necator (strain JMP 134)).